The following is a 520-amino-acid chain: Laccase (520 aa).

A signal peptide spans 1–21 (MSRFQSLLAFVVASLAAVAHA). 2 Plastocyanin-like domains span residues 23–148 (IGPT…FVVY) and 160–302 (VDND…ILRY). Asn-72 and Asn-75 each carry an N-linked (GlcNAc...) asparagine glycan. The Cu cation site is built by His-85, His-87, His-130, and His-132. Intrachain disulfides connect Cys-106–Cys-509 and Cys-138–Cys-226. N-linked (GlcNAc...) asparagine glycans are attached at residues Asn-210, Asn-229, and Asn-354. One can recognise a Plastocyanin-like 3 domain in the interval 369 to 491 (TVPVLLQIIS…AGFAVVFAED (123 aa)). Positions 416, 419, 421, 473, 474, 475, and 479 each coordinate Cu cation.

The protein belongs to the multicopper oxidase family. Requires Cu cation as cofactor.

It is found in the secreted. The catalysed reaction is 4 hydroquinone + O2 = 4 benzosemiquinone + 2 H2O. In terms of biological role, lignin degradation and detoxification of lignin-derived products. Has activity towards guaiacol. The chain is Laccase from Trametes hirsuta (White-rot fungus).